The sequence spans 423 residues: Endochitinase 42 (423 aa).

The N-terminal stretch at 1 to 22 (MLSFLGKSVALLAALQATLSSP) is a signal peptide. The propeptide occupies 23 to 34 (KPGHRRASVEKR). The region spanning 38-401 (YANSVYFTNW…GTSHRALGGL (364 aa)) is the GH18 domain. Chitin contacts are provided by residues 102-103 (GT) and 129-132 (GGWT). Glu171 (proton donor) is an active-site residue. Position 172 (Tyr172) interacts with chitin. N-linked (GlcNAc...) asparagine glycosylation occurs at Asn218. Residues 237–240 (MAYD) and Trp378 each bind chitin.

The protein belongs to the glycosyl hydrolase 18 family. Chitinase class V subfamily.

The protein localises to the secreted. The catalysed reaction is Random endo-hydrolysis of N-acetyl-beta-D-glucosaminide (1-&gt;4)-beta-linkages in chitin and chitodextrins.. Secreted chitinase involved in the degradation of chitin, a component of the cell walls of fungi and exoskeletal elements of some animals (including worms and arthropods). Plays a morphogenetic role during apical growth, cell division and differentiation (cell wall morphogenesis). Also acts as an antifungal agent. Involved in the degradation and further assimilation of phytopathogenic fungi, namely mycoparasitism, the major mechanism accounting for the antagonistic activity against phytopathogenic fungi displayed by Trichoderma. The chain is Endochitinase 42 (chit42) from Trichoderma harzianum (Hypocrea lixii).